The primary structure comprises 356 residues: Neutral protease 2 homolog UREG_03761 (356 aa).

Positions 1 to 19 (MRFSSSFLSVLALASQALA) are cleaved as a signal peptide. A propeptide spanning residues 20-181 (FPLNDLPTTD…ALPEATLDKR (162 aa)) is cleaved from the precursor. 2 disulfide bridges follow: Cys189-Cys259 and Cys266-Cys284. His308 contributes to the Zn(2+) binding site. Residue Glu309 is part of the active site. Zn(2+)-binding residues include His312 and Asp323.

The protein belongs to the peptidase M35 family. It depends on Zn(2+) as a cofactor.

Its subcellular location is the secreted. It catalyses the reaction Preferential cleavage of bonds with hydrophobic residues in P1'. Also 3-Asn-|-Gln-4 and 8-Gly-|-Ser-9 bonds in insulin B chain.. Secreted metalloproteinase that allows assimilation of proteinaceous substrates. Shows high activities on basic nuclear substrates such as histone and protamine. The chain is Neutral protease 2 homolog UREG_03761 from Uncinocarpus reesii (strain UAMH 1704).